The following is a 539-amino-acid chain: MAYASRIINHSKKLKDVSTLLRRENAATIRYYSNTNRAPLNREDTFNSRLGYPPLERISICSTSTLPVSIIFSTTRSNLSSAMGRPIFGKEFSCLMQSARGFSSGSDLPPHQEIGMPSLSPTMTEGNIARWLKKEGDKVAPGEVLCEVETDKATVEMECMEEGYLAKIVKAEGSKEIQVGEVIAITVEDEEDIGKFKDYTPSSTADAAPTKAEPTPAPPKEEKVKQPSSPPEPKASKPSTPPTGDRVFASPLARKLAEDNNVPLSDIEGTGPEGRIVKADIDEYLASSGKGATAKPSKSTDSKAPALDYVDIPHSQIRKVTASRLAFSKQTIPHYYLTVDTCVDKLMALRSQLNSFKEASGGKRISVNDLVVKAAALALRKVPQCNSSWTDDYIRQFKNVNINVAVQTENGLYVPVVKDADRKGLSTIGEEVRLLAQKAKENSLKPEDYEGGTFTVSNLGGPFGIKQFCAVVNPPQAAILAVGSAEKRVVPGNGPDQFNFASYMPVTLSCDHRVVDGAIGAEWLKAFKGYIENPKSMLL.

A mitochondrion-targeting transit peptide spans Met1–Phe102. Positions His111–Val187 constitute a Lipoyl-binding domain. The residue at position 152 (Lys152) is an N6-lipoyllysine. Positions Lys195 to Val247 are disordered. The segment covering Thr204–Pro214 has biased composition (low complexity). Residues Phe248–Leu285 enclose the Peripheral subunit-binding (PSBD) domain. Residues His512 and Asp516 contribute to the active site.

The protein belongs to the 2-oxoacid dehydrogenase family. It depends on (R)-lipoate as a cofactor.

It localises to the mitochondrion matrix. It catalyses the reaction N(6)-[(R)-dihydrolipoyl]-L-lysyl-[protein] + acetyl-CoA = N(6)-[(R)-S(8)-acetyldihydrolipoyl]-L-lysyl-[protein] + CoA. Its function is as follows. The pyruvate dehydrogenase complex catalyzes the overall conversion of pyruvate to acetyl-CoA and CO(2). It contains multiple copies of three enzymatic components: pyruvate dehydrogenase (E1), dihydrolipoamide acetyltransferase (E2) and lipoamide dehydrogenase (E3). The chain is Dihydrolipoyllysine-residue acetyltransferase component 3 of pyruvate dehydrogenase complex, mitochondrial from Arabidopsis thaliana (Mouse-ear cress).